A 743-amino-acid chain; its full sequence is Dystrobrevin alpha (743 aa).

An interaction with MAGEE1 region spans residues 1 to 288 (MIEDSGKRGN…SHSNQHQMKE (288 aa)). A ZZ-type zinc finger spans residues 238 to 294 (FHPVECSYCHSESMMGFRYRCQQCHNYQLCQDCFWRGHAGGSHSNQHQMKEYTSWKS). Zn(2+) is bound by residues cysteine 243, cysteine 246, cysteine 258, cysteine 261, cysteine 267, cysteine 270, histidine 280, and histidine 284. The interval 400 to 450 (DRLADEHVLIGLYVNMLRNNPSCMLESSNRLDEEHRLIARYAARLAAESSS) is syntrophin-binding region. The stretch at 461-556 (DISFTIDANK…EGLMKLLKTQ (96 aa)) forms a coiled coil. The tract at residues 556–575 (QGAGSPRSSPSHTISRPIPM) is disordered. Residues 557 to 569 (GAGSPRSSPSHTI) show a composition bias toward polar residues. Serine 662 is subject to Phosphoserine.

This sequence belongs to the dystrophin family. Dystrobrevin subfamily. Interacts with dystrophin, utrophin and the syntrophins SNTA1, SNTB1, SNTB2, SNTG1 and SNTG2. Interacts with MAGEE1. Binds dystrobrevin binding protein 1. Interacts with CTNNAL1. The interaction is required for correct localization of both CTNNAL1 and DTNA. In terms of assembly, does not interact with dystrophin. Post-translationally, phosphorylation of DTN-1 on tyrosine kinase substrate domain present in the C-terminus. As to expression, highly expressed in brain, skeletal and cardiac muscles, and expressed at lower levels in lung, liver and pancreas. Isoform 2 is not expressed in cardiac muscle. Isoform 7 and isoform 8 are only expressed in muscle.

It localises to the cytoplasm. Its subcellular location is the synapse. The protein resides in the cell membrane. Its function is as follows. May be involved in the formation and stability of synapses as well as being involved in the clustering of nicotinic acetylcholine receptors. This Homo sapiens (Human) protein is Dystrobrevin alpha.